Here is a 238-residue protein sequence, read N- to C-terminus: MATLGVNIDHIANVRQARRTVEPDPVQFAFLAELGGADSITVHLREDRRHIQDRDIFLLKETIKTKLNLEMAATEEMLKISKKLLPDFVTLVPEKREEVTTEGGLNVKNNQRYLKDYVTSLKSSNIEVSAFIDPLSEQINSSAEIGFDFIELHTGKYSELKGQERYVELQKIIESTHYAFDLGLVVNAGHGLNYQNAEKIASINNINELNIGHSIVARALAVGLERAVSEMKALISTN.

3-amino-2-oxopropyl phosphate is bound at residue asparagine 7. Residue 9-10 (DH) coordinates 1-deoxy-D-xylulose 5-phosphate. Arginine 18 contacts 3-amino-2-oxopropyl phosphate. Catalysis depends on histidine 43, which acts as the Proton acceptor. 1-deoxy-D-xylulose 5-phosphate-binding residues include arginine 45 and histidine 50. Catalysis depends on glutamate 70, which acts as the Proton acceptor. Threonine 100 serves as a coordination point for 1-deoxy-D-xylulose 5-phosphate. The Proton donor role is filled by histidine 190. Residues glycine 191 and 212-213 (GH) each bind 3-amino-2-oxopropyl phosphate.

The protein belongs to the PNP synthase family. Homooctamer; tetramer of dimers.

It is found in the cytoplasm. It catalyses the reaction 3-amino-2-oxopropyl phosphate + 1-deoxy-D-xylulose 5-phosphate = pyridoxine 5'-phosphate + phosphate + 2 H2O + H(+). It functions in the pathway cofactor biosynthesis; pyridoxine 5'-phosphate biosynthesis; pyridoxine 5'-phosphate from D-erythrose 4-phosphate: step 5/5. In terms of biological role, catalyzes the complicated ring closure reaction between the two acyclic compounds 1-deoxy-D-xylulose-5-phosphate (DXP) and 3-amino-2-oxopropyl phosphate (1-amino-acetone-3-phosphate or AAP) to form pyridoxine 5'-phosphate (PNP) and inorganic phosphate. The chain is Pyridoxine 5'-phosphate synthase from Prochlorococcus marinus (strain MIT 9515).